Reading from the N-terminus, the 157-residue chain is SUMO-conjugating enzyme UBC9 (157 aa).

Serine 2 carries the post-translational modification N-acetylserine. Residues 4–157 enclose the UBC core domain; sequence LCLQRLQEER…VLLQAKQYSK (154 aa). Residue cysteine 93 is the Glycyl thioester intermediate of the active site.

It belongs to the ubiquitin-conjugating enzyme family. As to quaternary structure, interacts with SIZ1.

It is found in the nucleus. It functions in the pathway protein modification; protein sumoylation. Functionally, E2 ubiquitin-like--protein ligase mediating SUMO/Smt3 attachment to septins and PCNA. Seems to be involved in degradation of S- (CLB5) and M-phase cyclins (CLB2). This chain is SUMO-conjugating enzyme UBC9 (UBC9), found in Saccharomyces cerevisiae (strain ATCC 204508 / S288c) (Baker's yeast).